The following is a 363-amino-acid chain: UDP-N-acetylglucosamine--N-acetylmuramyl-(pentapeptide) pyrophosphoryl-undecaprenol N-acetylglucosamine transferase (363 aa).

UDP-N-acetyl-alpha-D-glucosamine contacts are provided by residues 10–12 (TGG), Asn-124, Ser-195, Ile-250, and Gln-295.

Belongs to the glycosyltransferase 28 family. MurG subfamily.

Its subcellular location is the cell membrane. It catalyses the reaction Mur2Ac(oyl-L-Ala-gamma-D-Glu-L-Lys-D-Ala-D-Ala)-di-trans,octa-cis-undecaprenyl diphosphate + UDP-N-acetyl-alpha-D-glucosamine = beta-D-GlcNAc-(1-&gt;4)-Mur2Ac(oyl-L-Ala-gamma-D-Glu-L-Lys-D-Ala-D-Ala)-di-trans,octa-cis-undecaprenyl diphosphate + UDP + H(+). The protein operates within cell wall biogenesis; peptidoglycan biosynthesis. Functionally, cell wall formation. Catalyzes the transfer of a GlcNAc subunit on undecaprenyl-pyrophosphoryl-MurNAc-pentapeptide (lipid intermediate I) to form undecaprenyl-pyrophosphoryl-MurNAc-(pentapeptide)GlcNAc (lipid intermediate II). The protein is UDP-N-acetylglucosamine--N-acetylmuramyl-(pentapeptide) pyrophosphoryl-undecaprenol N-acetylglucosamine transferase of Lactiplantibacillus plantarum (strain ATCC BAA-793 / NCIMB 8826 / WCFS1) (Lactobacillus plantarum).